The following is a 276-amino-acid chain: NADH-cytochrome b5 reductase 2 (276 aa).

Residues 15–127 enclose the FAD-binding FR-type domain; that stretch reads EAKYPLPLIE…RGPTGRLFYN (113 aa). K17 carries the N6-acetyllysine modification. Y18 carries the post-translational modification Phosphotyrosine. FAD contacts are provided by residues 107 to 137 and 146 to 181; these read ENMK…IKTD and LVHH…RMSL.

The protein belongs to the flavoprotein pyridine nucleotide cytochrome reductase family. FAD serves as cofactor.

The enzyme catalyses 2 Fe(III)-[cytochrome b5] + NADH = 2 Fe(II)-[cytochrome b5] + NAD(+) + H(+). In terms of biological role, NADH-cytochrome b5 reductases are involved in desaturation and elongation of fatty acids, cholesterol biosynthesis, drug metabolism, and, in erythrocyte, methemoglobin reduction. Responsible for NADH-dependent lucigenin chemiluminescence in spermatozoa by reducing both lucigenin and 2-[4-iodophenyl]-3-[4-nitrophenyl]-5-[2,4-disulfophenyl]-2H tetrazolium monosodium salt (WST-1). This Rattus norvegicus (Rat) protein is NADH-cytochrome b5 reductase 2 (Cyb5r2).